We begin with the raw amino-acid sequence, 339 residues long: Cobalt-precorrin-5B C(1)-methyltransferase (339 aa).

This sequence belongs to the CbiD family.

The catalysed reaction is Co-precorrin-5B + S-adenosyl-L-methionine = Co-precorrin-6A + S-adenosyl-L-homocysteine. Its pathway is cofactor biosynthesis; adenosylcobalamin biosynthesis; cob(II)yrinate a,c-diamide from sirohydrochlorin (anaerobic route): step 6/10. Functionally, catalyzes the methylation of C-1 in cobalt-precorrin-5B to form cobalt-precorrin-6A. The protein is Cobalt-precorrin-5B C(1)-methyltransferase of Methanosarcina acetivorans (strain ATCC 35395 / DSM 2834 / JCM 12185 / C2A).